We begin with the raw amino-acid sequence, 503 residues long: Probable cytochrome P450 6a19 (503 aa).

Cys-445 is a heme binding site.

It belongs to the cytochrome P450 family. Requires heme as cofactor.

Its subcellular location is the endoplasmic reticulum membrane. The protein localises to the microsome membrane. In terms of biological role, may be involved in the metabolism of insect hormones and in the breakdown of synthetic insecticides. This is Probable cytochrome P450 6a19 (Cyp6a19) from Drosophila melanogaster (Fruit fly).